We begin with the raw amino-acid sequence, 264 residues long: Acyl-[acyl-carrier-protein]--UDP-N-acetylglucosamine O-acyltransferase (264 aa).

It belongs to the transferase hexapeptide repeat family. LpxA subfamily. Homotrimer.

It localises to the cytoplasm. It carries out the reaction a (3R)-hydroxyacyl-[ACP] + UDP-N-acetyl-alpha-D-glucosamine = a UDP-3-O-[(3R)-3-hydroxyacyl]-N-acetyl-alpha-D-glucosamine + holo-[ACP]. It participates in glycolipid biosynthesis; lipid IV(A) biosynthesis; lipid IV(A) from (3R)-3-hydroxytetradecanoyl-[acyl-carrier-protein] and UDP-N-acetyl-alpha-D-glucosamine: step 1/6. Functionally, involved in the biosynthesis of lipid A, a phosphorylated glycolipid that anchors the lipopolysaccharide to the outer membrane of the cell. The polypeptide is Acyl-[acyl-carrier-protein]--UDP-N-acetylglucosamine O-acyltransferase (Rickettsia felis (strain ATCC VR-1525 / URRWXCal2) (Rickettsia azadi)).